Here is a 359-residue protein sequence, read N- to C-terminus: Ornithine cyclodeaminase (359 aa).

Residues R53 and K77 each coordinate L-ornithine. NAD(+)-binding positions include T92, R120, A147 to Q148, D169, T209, V232 to D235, K239, and S300. Residue R120 coordinates L-ornithine. D235 serves as a coordination point for L-ornithine. D235 serves as the catalytic Proton donor/acceptor. V301 contributes to the L-ornithine binding site.

Belongs to the ornithine cyclodeaminase/mu-crystallin family. The cofactor is NAD(+).

It carries out the reaction L-ornithine = L-proline + NH4(+). It functions in the pathway amino-acid biosynthesis; L-proline biosynthesis; L-proline from L-ornithine: step 1/1. Functionally, catalyzes the conversion of L-ornithine into L-proline with release of ammonia. This Brucella melitensis biotype 1 (strain ATCC 23456 / CCUG 17765 / NCTC 10094 / 16M) protein is Ornithine cyclodeaminase.